A 579-amino-acid polypeptide reads, in one-letter code: Fatty-acid amide hydrolase 1 (579 aa).

Residues 9–29 (TLSGVSGVCLACSLLSAAVVL) traverse the membrane as a helical segment. The Cytoplasmic segment spans residues 30–403 (RWTGRQKARG…GDFVDPCLGD (374 aa)). Catalysis depends on Lys142, which acts as the Charge relay system. Residues Met191, Ser217, and 238-241 (IGGS) each bind substrate. Ser217 functions as the Charge relay system in the catalytic mechanism. Ser241 acts as the Acyl-ester intermediate in catalysis. Phosphoserine is present on Ser241. Residues 404–433 (LILILRLPSWFKRLLSLLLKPLFPRLAAFL) lie within the membrane without spanning it. The Cytoplasmic segment spans residues 434 to 579 (NSMRPRSAEK…QLMTPQKQPS (146 aa)).

The protein belongs to the amidase family. Homodimer. As to expression, found in neuronal cells throughout the CNS. Expressed in liver and brain, and to a lesser extent in spleen, lung, kidney and testes.

The protein resides in the endoplasmic reticulum membrane. The protein localises to the golgi apparatus membrane. The catalysed reaction is N-(5Z,8Z,11Z,14Z-eicosatetraenoyl)-ethanolamine + H2O = ethanolamine + (5Z,8Z,11Z,14Z)-eicosatetraenoate. It carries out the reaction (9Z)-octadecenamide + H2O = (9Z)-octadecenoate + NH4(+). The enzyme catalyses 2-(5Z,8Z,11Z,14Z-eicosatetraenoyl)-glycerol + H2O = glycerol + (5Z,8Z,11Z,14Z)-eicosatetraenoate + H(+). It catalyses the reaction (9Z,12Z,15Z)-octadecatrienamide + H2O = (9Z,12Z,15Z)-octadecatrienoate + NH4(+). The catalysed reaction is (5Z,8Z,11Z,14Z)-eicosatetraenamide + H2O = (5Z,8Z,11Z,14Z)-eicosatetraenoate + NH4(+). It carries out the reaction (6Z)-octadecenamide + H2O = (6Z)-octadecenoate + NH4(+). The enzyme catalyses (15Z)-tetracosenamide + H2O = (15Z)-tetracosenoate + NH4(+). It catalyses the reaction (8Z,11Z,14Z)-eicosatrienamide + H2O = (8Z,11Z,14Z)-eicosatrienoate + NH4(+). The catalysed reaction is (11Z,14Z,17Z)-eicosatrienamide + H2O = (11Z,14Z,17Z)-eicosatrienoate + NH4(+). It carries out the reaction (11Z,14Z)-eicosadienamide + H2O = (11Z,14Z)-eicosadienoate + NH4(+). The enzyme catalyses (9Z,12Z)-octadecadienamide + H2O = (9Z,12Z)-octadecadienoate + NH4(+). It catalyses the reaction tetradecamide + H2O = tetradecanoate + NH4(+). The catalysed reaction is N-(9Z-octadecenoyl) ethanolamine + H2O = ethanolamine + (9Z)-octadecenoate. It carries out the reaction N-(9Z-octadecenoyl)-taurine + H2O = taurine + (9Z)-octadecenoate. The enzyme catalyses 1-O-methyl-(5Z,8Z,11Z,14Z)-eicosatetraenoate + H2O = methanol + (5Z,8Z,11Z,14Z)-eicosatetraenoate + H(+). It catalyses the reaction (11Z)-eicosenamide + H2O = (11Z)-eicosenoate + NH4(+). The catalysed reaction is N-(9Z-hexadecenoyl) ethanolamine + H2O = (9Z)-hexadecenoate + ethanolamine. It carries out the reaction N-octadecanoyl ethanolamine + H2O = octadecanoate + ethanolamine. The enzyme catalyses N-docosanoyl-ethanolamine + H2O = docosanoate + ethanolamine. It catalyses the reaction N-tetracosanoyl-taurine + H2O = tetracosanoate + taurine. The catalysed reaction is N-(15Z-tetracosenoyl)-ethanolamine + H2O = (15Z)-tetracosenoate + ethanolamine. It carries out the reaction N-docosanoyl-taurine + H2O = docosanoate + taurine. The enzyme catalyses N-(15Z-tetracosenoyl)-taurine + H2O = (15Z)-tetracosenoate + taurine. It catalyses the reaction N-tricosanoyl-taurine + H2O = tricosanoate + taurine. The catalysed reaction is (9Z)-octadecenoate + glycine = N-(9Z-octadecenoyl)glycine + H2O. It carries out the reaction N-(5Z,8Z,11Z,14Z)-eicosatetraenoyl-glycine + H2O = (5Z,8Z,11Z,14Z)-eicosatetraenoate + glycine. The enzyme catalyses N-(5Z,8Z,11Z,14Z-eicosatetraenoyl)-L-serine + H2O = (5Z,8Z,11Z,14Z)-eicosatetraenoate + L-serine. Inhibited by trifluoromethyl ketone. Functionally, catalyzes the hydrolysis of endogenous amidated lipids like the sleep-inducing lipid oleamide ((9Z)-octadecenamide), the endocannabinoid anandamide (N-(5Z,8Z,11Z,14Z-eicosatetraenoyl)-ethanolamine), as well as other fatty amides, to their corresponding fatty acids, thereby regulating the signaling functions of these molecules. Hydrolyzes polyunsaturated substrate anandamide preferentially as compared to monounsaturated substrates. It can also catalyze the hydrolysis of the endocannabinoid 2-arachidonoylglycerol (2-(5Z,8Z,11Z,14Z-eicosatetraenoyl)-glycerol). FAAH cooperates with PM20D1 in the hydrolysis of amino acid-conjugated fatty acids such as N-fatty acyl glycine and N-fatty acyl-L-serine, thereby acting as a physiological regulator of specific subsets of intracellular, but not of extracellular, N-fatty acyl amino acids. In Rattus norvegicus (Rat), this protein is Fatty-acid amide hydrolase 1 (Faah).